The sequence spans 671 residues: Probable potassium transport system protein Kup (671 aa).

Residues 1–43 (MSQIPSPNDPASTGAAPSSAAVPAGPSATPAPSPTAGFSLPGH) are disordered. Positions 10–37 (PASTGAAPSSAAVPAGPSATPAPSPTAG) are enriched in low complexity. The next 12 helical transmembrane spans lie at 52-72 (LAAL…TSPL), 92-112 (VLGV…FKYM), 147-167 (LMLG…TPAI), 181-201 (PAME…LFLF), 209-229 (VGAV…VLGV), 255-275 (GWHG…GEAL), 291-311 (WLGL…ALLL), 323-343 (LLAP…AAIV), 381-401 (IYLP…VLGF), 407-427 (LASA…LLFH), 441-461 (AWPL…ANVV), and 465-485 (DGGW…STWK).

Belongs to the HAK/KUP transporter (TC 2.A.72) family.

It localises to the cell inner membrane. The enzyme catalyses K(+)(in) + H(+)(in) = K(+)(out) + H(+)(out). Its function is as follows. Transport of potassium into the cell. Likely operates as a K(+):H(+) symporter. This Anaeromyxobacter sp. (strain K) protein is Probable potassium transport system protein Kup.